A 434-amino-acid chain; its full sequence is Eukaryotic translation initiation factor 3 subunit E-2 (434 aa).

Residues 219–392 (FFNHPKGRDL…GHVVMGTQPL (174 aa)) enclose the PCI domain.

Belongs to the eIF-3 subunit E family. In terms of assembly, component of the eukaryotic translation initiation factor 3 (eIF-3) complex. The eIF-3 complex interacts with pix. Interacts with mxt.

The protein localises to the cytoplasm. Component of the eukaryotic translation initiation factor 3 (eIF-3) complex, which is involved in protein synthesis of a specialized repertoire of mRNAs and, together with other initiation factors, stimulates binding of mRNA and methionyl-tRNAi to the 40S ribosome. The eIF-3 complex specifically targets and initiates translation of a subset of mRNAs involved in cell proliferation. This is Eukaryotic translation initiation factor 3 subunit E-2 (eIF3-S6-2) from Drosophila willistoni (Fruit fly).